A 412-amino-acid chain; its full sequence is Flap endonuclease 1-B (412 aa).

An N-domain region spans residues 1 to 105 (MGIKGLTKLL…KELAKRSLKR (105 aa)). Residue aspartate 34 participates in Mg(2+) binding. Arginine 71 provides a ligand contact to DNA. The Mg(2+) site is built by aspartate 87, glutamate 159, glutamate 161, aspartate 180, and aspartate 182. Residues 123 to 254 (LIEKFSKRTV…QRALKLIRQH (132 aa)) are I-domain. Glutamate 159 lines the DNA pocket. Glycine 232 and aspartate 234 together coordinate DNA. A Mg(2+)-binding site is contributed by aspartate 234.

The protein belongs to the XPG/RAD2 endonuclease family. FEN1 subfamily. In terms of assembly, interacts with PCNA. Three molecules of FEN1 bind to one PCNA trimer with each molecule binding to one PCNA monomer. PCNA stimulates the nuclease activity without altering cleavage specificity. Requires Mg(2+) as cofactor. In terms of processing, phosphorylated. Phosphorylation upon DNA damage induces relocalization to the nuclear plasma.

The protein localises to the nucleus. It localises to the nucleolus. The protein resides in the nucleoplasm. It is found in the mitochondrion. Its function is as follows. Structure-specific nuclease with 5'-flap endonuclease and 5'-3' exonuclease activities involved in DNA replication and repair. During DNA replication, cleaves the 5'-overhanging flap structure that is generated by displacement synthesis when DNA polymerase encounters the 5'-end of a downstream Okazaki fragment. It enters the flap from the 5'-end and then tracks to cleave the flap base, leaving a nick for ligation. Also involved in the long patch base excision repair (LP-BER) pathway, by cleaving within the apurinic/apyrimidinic (AP) site-terminated flap. Acts as a genome stabilization factor that prevents flaps from equilibrating into structures that lead to duplications and deletions. Also possesses 5'-3' exonuclease activity on nicked or gapped double-stranded DNA, and exhibits RNase H activity. Also involved in replication and repair of rDNA and in repairing mitochondrial DNA. The chain is Flap endonuclease 1-B from Oryza sativa subsp. indica (Rice).